A 277-amino-acid chain; its full sequence is Orotidine 5'-phosphate decarboxylase (277 aa).

Substrate-binding positions include aspartate 40, 62-64 (KTH), 93-102 (DRKFIDIGNT), tyrosine 229, and arginine 247. Lysine 95 (proton donor) is an active-site residue.

This sequence belongs to the OMP decarboxylase family.

The catalysed reaction is orotidine 5'-phosphate + H(+) = UMP + CO2. The protein operates within pyrimidine metabolism; UMP biosynthesis via de novo pathway; UMP from orotate: step 2/2. The chain is Orotidine 5'-phosphate decarboxylase (pyrG) from Aspergillus awamori (Black koji mold).